Here is a 390-residue protein sequence, read N- to C-terminus: Probable galacturonosyltransferase-like 9 (390 aa).

Residues 1–10 (MRLRFPMKSA) lie on the Cytoplasmic side of the membrane. The helical; Signal-anchor for type II membrane protein transmembrane segment at 11-31 (VLAFAIFLVFIPLFSVGIRMI) threads the bilayer. The Lumenal portion of the chain corresponds to 32–390 (PGRLTAVSAT…SELTEDSSFF (359 aa)). N-linked (GlcNAc...) asparagine glycosylation is found at Asn205 and Asn223.

Belongs to the glycosyltransferase 8 family.

The protein resides in the golgi apparatus membrane. It functions in the pathway glycan metabolism; pectin biosynthesis. In terms of biological role, may be involved in pectin and/or xylans biosynthesis in cell walls. The polypeptide is Probable galacturonosyltransferase-like 9 (GATL9) (Arabidopsis thaliana (Mouse-ear cress)).